A 404-amino-acid polypeptide reads, in one-letter code: Inner membrane transport protein YdiM (404 aa).

Over 1-5 (MKNPY) the chain is Periplasmic. The helical transmembrane segment at 6–26 (FPTALGLYFNYLVHGMGVLLM) threads the bilayer. Residues 27 to 43 (SLNMASLETLWQTNAAG) lie on the Cytoplasmic side of the membrane. A helical transmembrane segment spans residues 44-64 (VSIVISSLGIGRLSVLLFAGL). The Periplasmic portion of the chain corresponds to 65 to 84 (LSDRFGRRPFIMLGMCCYMA). A helical transmembrane segment spans residues 85–105 (FFFGILQTNNIIIAYVFGFLA). The Cytoplasmic portion of the chain corresponds to 106 to 132 (GMANSFLDAGTYPSLMEAFPRSPGTAN). A helical transmembrane segment spans residues 133–153 (ILIKAFVSSGQFLLPLIISLL). Residues 154-157 (VWAE) are Periplasmic-facing. The chain crosses the membrane as a helical span at residues 158–178 (LWFGWSFMIAAGIMFINALFL). Topologically, residues 179–206 (YRCTFPPHPGRRLPVIKKTTSSTEHRCS) are cytoplasmic. A helical membrane pass occupies residues 207–227 (IIDLASYTLYGYISMATFYLV). At 228–246 (SQWLAQYGQFVAGMSYTMS) the chain is on the periplasmic side. A helical transmembrane segment spans residues 247–267 (IKLLSIYTVGSLLCVFITAPL). At 268 to 273 (IRNTVR) the chain is on the cytoplasmic side. A helical membrane pass occupies residues 274–294 (PTTLLMLYTFISFIALFTVCL). At 295 to 296 (HP) the chain is on the periplasmic side. Residues 297–317 (TFYVVIIFAFVIGFTSAGGVV) form a helical membrane-spanning segment. The Cytoplasmic segment spans residues 318 to 336 (QIGLTLMAERFPYAKGKAT). A helical membrane pass occupies residues 337-357 (GIYYSAGSIATFTIPLITAHL). The Periplasmic portion of the chain corresponds to 358-364 (SQRSIAD). Residues 365–385 (IMWFDTAIAAIGFLLALFIGL) form a helical membrane-spanning segment. Residues 386–404 (RSRKKTRHHSLKENVAPGG) are Cytoplasmic-facing.

The protein belongs to the major facilitator superfamily.

It localises to the cell inner membrane. This Escherichia coli (strain K12) protein is Inner membrane transport protein YdiM (ydiM).